The chain runs to 310 residues: Quinolinate synthase (310 aa).

Positions 27 and 44 each coordinate iminosuccinate. Cys-89 is a [4Fe-4S] cluster binding site. Residues 115 to 117 and Ser-132 each bind iminosuccinate; that span reads YVN. Cys-175 contributes to the [4Fe-4S] cluster binding site. Residues 201–203 and Thr-222 contribute to the iminosuccinate site; that span reads HPE. A [4Fe-4S] cluster-binding site is contributed by Cys-267.

It belongs to the quinolinate synthase family. Type 2 subfamily. It depends on [4Fe-4S] cluster as a cofactor.

The protein resides in the cytoplasm. The catalysed reaction is iminosuccinate + dihydroxyacetone phosphate = quinolinate + phosphate + 2 H2O + H(+). Its pathway is cofactor biosynthesis; NAD(+) biosynthesis; quinolinate from iminoaspartate: step 1/1. Functionally, catalyzes the condensation of iminoaspartate with dihydroxyacetone phosphate to form quinolinate. The sequence is that of Quinolinate synthase from Thermus thermophilus (strain ATCC 27634 / DSM 579 / HB8).